The sequence spans 217 residues: Ras-related protein RABA1e (217 aa).

A GTP-binding site is contributed by 20–27 (GDSGVGKS). Positions 42–50 (SKSTIGVEF) match the Effector region motif. Residues 68–72 (DTAGQ), 126–129 (NKAD), and 156–157 (SA) each bind GTP. S-geranylgeranyl cysteine attachment occurs at residues C214 and C215.

It belongs to the small GTPase superfamily. Rab family.

It is found in the cell membrane. Its function is as follows. Intracellular vesicle trafficking and protein transport. This is Ras-related protein RABA1e (RABA1E) from Arabidopsis thaliana (Mouse-ear cress).